A 648-amino-acid chain; its full sequence is Cell surface glycoprotein MUC18 (648 aa).

The N-terminal stretch at 1 to 23 (MGLPRLVCAFLFAACCCCRSATG) is a signal peptide. Ig-like V-type domains lie at 24 to 131 (VPGE…HYVQ) and 141 to 244 (PTIQ…KEVT). Residues 24–560 (VPGEEKQPTP…EKKLPQQESK (537 aa)) are Extracellular-facing. 5 disulfide bridges follow: cysteine 50–cysteine 118, cysteine 163–cysteine 225, cysteine 274–cysteine 322, cysteine 367–cysteine 409, and cysteine 454–cysteine 501. N-linked (GlcNAc...) asparagine glycosylation occurs at asparagine 58. Ig-like C2-type domains follow at residues 246-332 (PVLY…TTVM), 337-426 (PLEL…RRVS), and 432-512 (SPWM…SNTT). The segment at 282 to 304 (PHFTINKKNPSTEEMEEESTDEN) is disordered. N-linked (GlcNAc...) asparagine glycosylation occurs at asparagine 510. Polar residues predominate over residues 527–549 (DSSQTTGLSTPTVSPHSRANSTS). The interval 527–554 (DSSQTTGLSTPTVSPHSRANSTSTEKKL) is disordered. A helical membrane pass occupies residues 561–581 (GVVIVAVIVCTLVLAVLGATL). At 582–648 (YYFYKKGKLP…QGEKYIDLRH (67 aa)) the chain is on the cytoplasmic side. Phosphoserine occurs at positions 608 and 616. The disordered stretch occupies residues 626-648 (LQGSNGDKRAPGDQGEKYIDLRH). Residues 631–648 (GDKRAPGDQGEKYIDLRH) show a composition bias toward basic and acidic residues.

As to expression, detected in lung, uterus and placenta (at protein level). Detected in heart, lung, kidney, adrenal gland, intestine, testis, skeletal muscle and aorta. Detected at low levels in adult brain, in particular in brain stem and spinal cord, but also in hippocampus, olfactory bulb and striatum (at protein level).

Its subcellular location is the cell membrane. It is found in the perikaryon. Functionally, plays a role in cell adhesion, and in cohesion of the endothelial monolayer at intercellular junctions in vascular tissue. Its expression may allow melanoma cells to interact with cellular elements of the vascular system, thereby enhancing hematogeneous tumor spread. Could be an adhesion molecule active in neural crest cells during embryonic development. Acts as a surface receptor that triggers tyrosine phosphorylation of FYN and PTK2/FAK1, and a transient increase in the intracellular calcium concentration. This is Cell surface glycoprotein MUC18 (Mcam) from Rattus norvegicus (Rat).